We begin with the raw amino-acid sequence, 230 residues long: uncharacterized protein (230 aa).

The next 6 helical transmembrane spans lie at 4 to 24 (ACIAIIIILLTVAAYLAMVKL), 30 to 50 (LPFLIPVLTTTILIVAALMMF), 67 to 87 (LLGPAVVALAYPLYKQWHIIV), 91 to 111 (VPILGGVLVGLCMGMISGLIF), 148 to 168 (MTVVFVMIAGFSGVILGPLFL), and 210 to 230 (MTLCAVLGSFFGPLVVWLFHI).

The protein belongs to the YohK (E.coli)/YwbG (IPA-22R) (B.subtilis) family.

It localises to the cell membrane. This is an uncharacterized protein from Bacillus subtilis (strain 168).